The chain runs to 108 residues: Integration host factor subunit alpha (108 aa).

This sequence belongs to the bacterial histone-like protein family. In terms of assembly, heterodimer of an alpha and a beta chain.

This protein is one of the two subunits of integration host factor, a specific DNA-binding protein that functions in genetic recombination as well as in transcriptional and translational control. The protein is Integration host factor subunit alpha of Methylorubrum populi (strain ATCC BAA-705 / NCIMB 13946 / BJ001) (Methylobacterium populi).